A 285-amino-acid chain; its full sequence is 2-dehydro-3-deoxyphosphooctonate aldolase (285 aa).

Belongs to the KdsA family.

The protein resides in the cytoplasm. It catalyses the reaction D-arabinose 5-phosphate + phosphoenolpyruvate + H2O = 3-deoxy-alpha-D-manno-2-octulosonate-8-phosphate + phosphate. It functions in the pathway carbohydrate biosynthesis; 3-deoxy-D-manno-octulosonate biosynthesis; 3-deoxy-D-manno-octulosonate from D-ribulose 5-phosphate: step 2/3. It participates in bacterial outer membrane biogenesis; lipopolysaccharide biosynthesis. The chain is 2-dehydro-3-deoxyphosphooctonate aldolase from Leptothrix cholodnii (strain ATCC 51168 / LMG 8142 / SP-6) (Leptothrix discophora (strain SP-6)).